A 536-amino-acid polypeptide reads, in one-letter code: Glutamate--tRNA ligase, mitochondrial (536 aa).

48–50 (RFA) lines the L-glutamate pocket. Residues 53-61 (PTGFLHLGS) carry the 'HIGH' region motif. His-58 provides a ligand contact to ATP. Residues Glu-84, 235 to 239 (YHLAN), and Arg-253 each bind L-glutamate. ATP-binding positions include Glu-256 and 291-295 (KLSKR). Residues 291-295 (KLSKR) carry the 'KMSKS' region motif.

It belongs to the class-I aminoacyl-tRNA synthetase family. Glutamate--tRNA ligase type 1 subfamily.

It localises to the mitochondrion matrix. It carries out the reaction tRNA(Glu) + L-glutamate + ATP = L-glutamyl-tRNA(Glu) + AMP + diphosphate. Its function is as follows. Catalyzes the attachment of glutamate to tRNA(Glu) in a two-step reaction: glutamate is first activated by ATP to form Glu-AMP and then transferred to the acceptor end of tRNA(Glu). The polypeptide is Glutamate--tRNA ligase, mitochondrial (MSE1) (Saccharomyces cerevisiae (strain ATCC 204508 / S288c) (Baker's yeast)).